The primary structure comprises 492 residues: MDFNILYSFVSNKTFTDVEIVLIDEINRVNMNVHKAVLASSSQYFLNLFTKFSETNKSTITIRVRDSQISSDIICSFYGQIVDSTNYPDWKYTLLKYQCLDYFSLDYNIDILTGLKIPSEGFDLLLETANTIGYRNEINKLIAKNIPDNYDLSIFSDEFLGSLRKYICKHNIITANFKSINIYDVITGNKLSSLSLNNNFSHVCKVGKNIIAIVYYCADKIFLFDLVSRDVIDTLHNLDIQSSCDMTAICYIKSLNHLVTANSNNQLIVWDLTTRQIIKIKKVNRLINRLIANHTIITDYNLFISIGYNESILVWDKNYTISKGIDSPNKITTYSASGRELILANARYIKIFDIDEGKILYKTNNDTFRTPYDIINICDNSYILFDSDNEPICYLIYDWKNVSKIRLNRSKKNYDNIFCKKFPPESVNYSANDTNSNILIVVTDYHTVYAQINGKKYGPFVVKPNNIAGVFFVKDKKATNLLNSINDLIKHN.

In terms of domain architecture, BTB spans 16 to 86; it reads TDVEIVLIDE…FYGQIVDSTN (71 aa). 2 WD repeats span residues 241–281 and 286–325; these read QSSC…IKIK and LINR…SKGI.

It belongs to the mimivirus BTB/WD family.

This chain is Putative BTB/POZ domain and WD-repeat protein R786, found in Acanthamoeba polyphaga (Amoeba).